The primary structure comprises 208 residues: Small ribosomal subunit protein eS8 (208 aa).

Residues 1 to 27 are disordered; the sequence is MGISRDNWHKRRKTGGKRKPYHKKRKY. A lipid anchor (N-myristoyl glycine) is attached at G2. Residues 8–26 show a composition bias toward basic residues; that stretch reads WHKRRKTGGKRKPYHKKRK. An N6-acetyllysine mark is found at K37 and K128. T130 carries the post-translational modification Phosphothreonine. S160 bears the Phosphoserine mark. Glycyl lysine isopeptide (Lys-Gly) (interchain with G-Cter in SUMO2) cross-links involve residues K170 and K193.

It belongs to the eukaryotic ribosomal protein eS8 family. Component of the small ribosomal subunit. Identified in a IGF2BP1-dependent mRNP granule complex containing untranslated mRNAs. Part of the small subunit (SSU) processome, composed of more than 70 proteins and the RNA chaperone small nucleolar RNA (snoRNA) U3.

The protein localises to the cytoplasm. It is found in the membrane. The protein resides in the nucleus. It localises to the nucleolus. Its function is as follows. Component of the small ribosomal subunit. The ribosome is a large ribonucleoprotein complex responsible for the synthesis of proteins in the cell. Part of the small subunit (SSU) processome, first precursor of the small eukaryotic ribosomal subunit. During the assembly of the SSU processome in the nucleolus, many ribosome biogenesis factors, an RNA chaperone and ribosomal proteins associate with the nascent pre-rRNA and work in concert to generate RNA folding, modifications, rearrangements and cleavage as well as targeted degradation of pre-ribosomal RNA by the RNA exosome. The sequence is that of Small ribosomal subunit protein eS8 (Rps8) from Mus musculus (Mouse).